Consider the following 415-residue polypeptide: Dibenzothiophene monooxygenase (415 aa).

Residues Y94, 127 to 132 (NASSEN), 157 to 161 (KHFSS), R280, 365 to 366 (IG), and T387 contribute to the FMN site. The tract at residues 129–140 (SSENNSHILDWK) is lid loop.

Belongs to the DszC flavin monooxygenase family. As to quaternary structure, homotetramer.

It localises to the cytoplasm. It catalyses the reaction dibenzothiophene + 2 FMNH2 + 2 O2 = dibenzothiophene 5,5-dioxide + 2 FMN + 2 H2O + 2 H(+). It carries out the reaction dibenzothiophene + FMNH2 + O2 = dibenzothiophene 5-oxide + FMN + H2O + H(+). The enzyme catalyses dibenzothiophene 5-oxide + FMNH2 + O2 = dibenzothiophene 5,5-dioxide + FMN + H2O + H(+). The protein operates within sulfur metabolism; dibenzothiophene degradation. With respect to regulation, inhibited at high concentrations of FMN or FAD. Functionally, catalyzes the first step of the '4S' desulfurization pathway that removes covalently bound sulfur from dibenzothiophene (DBT) without breaking carbon-carbon bonds. Sulfur dioxygenase which converts DBT to DBT-sulfone (DBTO2 or DBT 5,5-dioxide) probably in a stepwise manner. In addition to FMNH2 can also use FAD (although FAD is less efficient). The chain is Dibenzothiophene monooxygenase from Mycolicibacterium goodii (Mycobacterium goodii).